Reading from the N-terminus, the 299-residue chain is Urease accessory protein UreD (299 aa).

The protein belongs to the UreD family. In terms of assembly, ureD, UreF and UreG form a complex that acts as a GTP-hydrolysis-dependent molecular chaperone, activating the urease apoprotein by helping to assemble the nickel containing metallocenter of UreC. The UreE protein probably delivers the nickel.

It localises to the cytoplasm. Required for maturation of urease via the functional incorporation of the urease nickel metallocenter. The chain is Urease accessory protein UreD from Haloarcula marismortui (strain ATCC 43049 / DSM 3752 / JCM 8966 / VKM B-1809) (Halobacterium marismortui).